The following is a 178-amino-acid chain: Large ribosomal subunit protein uL6 (178 aa).

Belongs to the universal ribosomal protein uL6 family. Part of the 50S ribosomal subunit.

In terms of biological role, this protein binds to the 23S rRNA, and is important in its secondary structure. It is located near the subunit interface in the base of the L7/L12 stalk, and near the tRNA binding site of the peptidyltransferase center. In Staphylococcus epidermidis (strain ATCC 35984 / DSM 28319 / BCRC 17069 / CCUG 31568 / BM 3577 / RP62A), this protein is Large ribosomal subunit protein uL6.